The following is a 429-amino-acid chain: MPAIVIVGAQWGDEGKGKATDLLGGRVDYVVKPNGGNNAGHTVVVGGEKFELKLLPAGILSPNATSVIGNGVVINPQALFEEIDGLEARGADTSHLRISANAHLVAPYHQTLDQVSERFLGKRAIGTTGRGIGPTYMDKVGRLGIRVQDVLDESILRQKIEGALRQKNELLVKLYNRRAFEVDEIVEYFMGFADRLAPMIVDSTRLLNEALDRDEVVLMEGGQATYLDVDHGTYPFVTSSNPTAGGASVGSGVGPTRITRVIGIQKAYTTRVGAGPFPTELFDEMGERLRTTGGEFGVNTGRPRRTGWYDAVMARQAARINGFTDLFITKLDVLTGLSEIPVCVAYEVDGQRFDEMPMTQSDFHHAVPVYENFPGWTEDITGARSLEDLPKNAQDYVHALEAMSGCRISAVGVGPDRDDTIVVRDLIAD.

GTP contacts are provided by residues 12-18 (GDEGKGK) and 40-42 (GHT). D13 functions as the Proton acceptor in the catalytic mechanism. 2 residues coordinate Mg(2+): D13 and G40. Residues 13–16 (DEGK), 38–41 (NAGH), T128, R142, Q223, T238, and R302 contribute to the IMP site. The Proton donor role is filled by H41. A substrate-binding site is contributed by 298-304 (VNTGRPR). Residues R304, 330–332 (KLD), and 412–414 (GVG) each bind GTP.

The protein belongs to the adenylosuccinate synthetase family. Homodimer. Mg(2+) is required as a cofactor.

It localises to the cytoplasm. It carries out the reaction IMP + L-aspartate + GTP = N(6)-(1,2-dicarboxyethyl)-AMP + GDP + phosphate + 2 H(+). Its pathway is purine metabolism; AMP biosynthesis via de novo pathway; AMP from IMP: step 1/2. Its function is as follows. Plays an important role in the de novo pathway of purine nucleotide biosynthesis. Catalyzes the first committed step in the biosynthesis of AMP from IMP. This is Adenylosuccinate synthetase from Kocuria rhizophila (strain ATCC 9341 / DSM 348 / NBRC 103217 / DC2201).